The following is a 675-amino-acid chain: Zinc finger CCCH domain-containing protein 65 (675 aa).

The tract at residues 294–320 (TFSNEAKMDPGTSIKKRSAPSKDAKAR) is disordered. The segment covering 307–320 (IKKRSAPSKDAKAR) has biased composition (basic residues). A coiled-coil region spans residues 314–342 (SKDAKARKRAKARIKRAQERIALGVKKLK). 3 consecutive C3H1-type zinc fingers follow at residues 350–377 (PKPI…HDTI), 384–406 (PCCY…HDLS), and 409–432 (PCNN…HKGT). Disordered stretches follow at residues 487–572 (LKPS…LPLG) and 586–612 (EQKT…SHIQ). Residues 490–504 (SSHSNQRNSSDASSS) show a composition bias toward low complexity. Residues 543–567 (KASSASKPNTDNSDSQTLKQSQQGS) are compositionally biased toward polar residues. Residues 586–595 (EQKTLNREPQ) are compositionally biased toward basic and acidic residues. A compositionally biased stretch (polar residues) spans 597 to 612 (PASSKNLKTTPSSHIQ).

In terms of biological role, possesses RNA-binding and ribonuclease activities in vitro. In Arabidopsis thaliana (Mouse-ear cress), this protein is Zinc finger CCCH domain-containing protein 65 (EMB1789).